Consider the following 420-residue polypeptide: 3-phosphoshikimate 1-carboxyvinyltransferase (420 aa).

Residues Lys20, Ser21, and Arg25 each coordinate 3-phosphoshikimate. Lys20 contacts phosphoenolpyruvate. Arg119 serves as a coordination point for phosphoenolpyruvate. Residues Ser161, Ser162, Gln163, Ser189, Asp303, Gln326, and Lys330 each coordinate 3-phosphoshikimate. Position 163 (Gln163) interacts with phosphoenolpyruvate. Asp303 (proton acceptor) is an active-site residue. Phosphoenolpyruvate contacts are provided by Arg334, Arg375, and Lys400.

The protein belongs to the EPSP synthase family. In terms of assembly, monomer.

The protein resides in the cytoplasm. The enzyme catalyses 3-phosphoshikimate + phosphoenolpyruvate = 5-O-(1-carboxyvinyl)-3-phosphoshikimate + phosphate. It functions in the pathway metabolic intermediate biosynthesis; chorismate biosynthesis; chorismate from D-erythrose 4-phosphate and phosphoenolpyruvate: step 6/7. In terms of biological role, catalyzes the transfer of the enolpyruvyl moiety of phosphoenolpyruvate (PEP) to the 5-hydroxyl of shikimate-3-phosphate (S3P) to produce enolpyruvyl shikimate-3-phosphate and inorganic phosphate. The chain is 3-phosphoshikimate 1-carboxyvinyltransferase from Dehalococcoides mccartyi (strain ATCC BAA-2266 / KCTC 15142 / 195) (Dehalococcoides ethenogenes (strain 195)).